Here is a 188-residue protein sequence, read N- to C-terminus: MVNLNQSLGDLFKGIIPNVYVLGATIVSFLILFLFITYFVYRPLKKYIKKRKDFLQNHIDLTIKSNVEAEKLEKKSQQKLLETKEFCIELKEKSQIEANEFLEDAKKTAIDNARQLINEGQKVLLEYENEIKSKYYMNVINVAVEICQKYLEKQDKNNKILQQSLIADLEKELKKRENSSKKKDNFGK.

A helical transmembrane segment spans residues 19–39; sequence VYVLGATIVSFLILFLFITYF.

The protein belongs to the ATPase B chain family. F-type ATPases have 2 components, F(1) - the catalytic core - and F(0) - the membrane proton channel. F(1) has five subunits: alpha(3), beta(3), gamma(1), delta(1), epsilon(1). F(0) has three main subunits: a(1), b(2) and c(10-14). The alpha and beta chains form an alternating ring which encloses part of the gamma chain. F(1) is attached to F(0) by a central stalk formed by the gamma and epsilon chains, while a peripheral stalk is formed by the delta and b chains.

The protein localises to the cell membrane. In terms of biological role, f(1)F(0) ATP synthase produces ATP from ADP in the presence of a proton or sodium gradient. F-type ATPases consist of two structural domains, F(1) containing the extramembraneous catalytic core and F(0) containing the membrane proton channel, linked together by a central stalk and a peripheral stalk. During catalysis, ATP synthesis in the catalytic domain of F(1) is coupled via a rotary mechanism of the central stalk subunits to proton translocation. Component of the F(0) channel, it forms part of the peripheral stalk, linking F(1) to F(0). The protein is ATP synthase subunit b of Mesomycoplasma hyopneumoniae (strain J / ATCC 25934 / NCTC 10110) (Mycoplasma hyopneumoniae).